Reading from the N-terminus, the 708-residue chain is Otogelin-like protein (708 aa).

A VWFD domain is found at 1–113 (KIIVNRLARK…SWEIEKSFEV (113 aa)). Asn553 is a glycosylation site (N-linked (GlcNAc...) asparagine). 4 disulfides stabilise this stretch: Cys616–Cys672, Cys637–Cys686, Cys648–Cys703, and Cys652–Cys705. The 93-residue stretch at 616-708 (CKREERICQK…EPIDCTCQWN (93 aa)) folds into the CTCK domain.

This sequence belongs to the otogelin family.

Its subcellular location is the secreted. The chain is Otogelin-like protein (OTOGL) from Pongo abelii (Sumatran orangutan).